A 229-amino-acid chain; its full sequence is NAD(P)H-quinone oxidoreductase subunit K, chloroplastic (229 aa).

4 residues coordinate [4Fe-4S] cluster: C43, C44, C108, and C139.

This sequence belongs to the complex I 20 kDa subunit family. As to quaternary structure, NDH is composed of at least 16 different subunits, 5 of which are encoded in the nucleus. [4Fe-4S] cluster serves as cofactor.

It localises to the plastid. The protein resides in the chloroplast thylakoid membrane. It catalyses the reaction a plastoquinone + NADH + (n+1) H(+)(in) = a plastoquinol + NAD(+) + n H(+)(out). It carries out the reaction a plastoquinone + NADPH + (n+1) H(+)(in) = a plastoquinol + NADP(+) + n H(+)(out). In terms of biological role, NDH shuttles electrons from NAD(P)H:plastoquinone, via FMN and iron-sulfur (Fe-S) centers, to quinones in the photosynthetic chain and possibly in a chloroplast respiratory chain. The immediate electron acceptor for the enzyme in this species is believed to be plastoquinone. Couples the redox reaction to proton translocation, and thus conserves the redox energy in a proton gradient. The polypeptide is NAD(P)H-quinone oxidoreductase subunit K, chloroplastic (Coffea arabica (Arabian coffee)).